The primary structure comprises 284 residues: Tropomyosin alpha-3 chain (284 aa).

Met-1 carries the N-acetylmethionine modification. A disordered region spans residues 1–40 (MEAIKKKMQMLKLDKENALDRAEQAEAEQKQAEERSKQLE). A coiled-coil region spans residues 1-284 (MEAIKKKMQM…DHALNDMTSI (284 aa)). Residues 12-40 (KLDKENALDRAEQAEAEQKQAEERSKQLE) show a composition bias toward basic and acidic residues. At Thr-53 the chain carries Phosphothreonine. Ser-61 and Ser-87 each carry phosphoserine. Phosphothreonine occurs at positions 108 and 252. Position 261 is a phosphotyrosine (Tyr-261). A Phosphoserine modification is found at Ser-271. Thr-282 bears the Phosphothreonine mark. Ser-283 carries the phosphoserine modification.

It belongs to the tropomyosin family. Homodimer. Heterodimer of an alpha (TPM1, TPM3 or TPM4) and a beta (TPM2) chain. Interacts with TMOD1. Interacts with TNNT1.

It is found in the cytoplasm. The protein resides in the cytoskeleton. Binds to actin filaments in muscle and non-muscle cells. Plays a central role, in association with the troponin complex, in the calcium dependent regulation of vertebrate striated muscle contraction. Smooth muscle contraction is regulated by interaction with caldesmon. In non-muscle cells is implicated in stabilizing cytoskeleton actin filaments. This Sus scrofa (Pig) protein is Tropomyosin alpha-3 chain (TPM3).